The primary structure comprises 466 residues: FAD-dependent monooxygenase dpfgE (466 aa).

A signal peptide spans 1–23 (MSQKPFRVIIVGGSVTGLTLAHS). Positions 35, 49, and 108 each coordinate FAD. N-linked (GlcNAc...) asparagine glycans are attached at residues N128 and N192. D312 and A325 together coordinate FAD. The N-linked (GlcNAc...) asparagine glycan is linked to N376. Residues 443 to 465 (GVVRNVFFLLAATVIVAWVCRLW) traverse the membrane as a helical segment.

Belongs to the paxM FAD-dependent monooxygenase family. FAD serves as cofactor.

The protein localises to the membrane. It functions in the pathway secondary metabolite biosynthesis; terpenoid biosynthesis. Its function is as follows. FAD-dependent monooxygenase; part of the gene cluster that mediates the biosynthesis of diterpenoid pyrones. The first step of the pathway is the synthesis of the alpha-pyrone moiety by the polyketide synthase dpfgA via condensation of one acetyl-CoA starter unit with 3 malonyl-CoA units and 2 methylations. The alpha-pyrone is then combined with geranylgeranyl pyrophosphate (GGPP) formed by the GGPP synthase dpfgD through the action of the prenyltransferase dpfgC to yield a linear alpha-pyrone diterpenoid. Subsequent steps in the diterpenoid pyrone biosynthetic pathway involve the decalin core formation, which is initiated by the epoxidation of the C10-C11 olefin by the FAD-dependent oxidoreductase dpfgE, and is followed by a cyclization cascade catalyzed by the terpene cyclase dpfgB. The short chain dehydrogenase/reductase dpfgG then oxidizes the 8S hydroxy group to a ketone and the short chain dehydrogenase/reductase dpfgH reduces the ketone to the 8R hydroxy group to yield higginsianin B. Higginsianin B is further methylated by the methyltransferase dpfgI to produce the intermediate named FDDP B. The cytochrome P450 monooxygenase dfgpJ then catalyzes a three-step oxidation at C-27 to generate a carboxylic acid as well as C-26 hydroxylation. Finally, methyltransferase dpfgK methylates the carboxylic acid generated by dpfgJ, yielding the final diterpenoid pyrones from the pathway which were named FDDP D and FDDP E. The protein is FAD-dependent monooxygenase dpfgE of Gibberella zeae (strain ATCC MYA-4620 / CBS 123657 / FGSC 9075 / NRRL 31084 / PH-1) (Wheat head blight fungus).